The chain runs to 151 residues: Ribosome-binding factor A (151 aa).

Residues 120–151 (RSPKVVRDLDDTSSDDTSPDANTDTDKETDAE) are disordered.

The protein belongs to the RbfA family. As to quaternary structure, monomer. Binds 30S ribosomal subunits, but not 50S ribosomal subunits or 70S ribosomes.

Its subcellular location is the cytoplasm. Functionally, one of several proteins that assist in the late maturation steps of the functional core of the 30S ribosomal subunit. Associates with free 30S ribosomal subunits (but not with 30S subunits that are part of 70S ribosomes or polysomes). Required for efficient processing of 16S rRNA. May interact with the 5'-terminal helix region of 16S rRNA. This Xanthobacter autotrophicus (strain ATCC BAA-1158 / Py2) protein is Ribosome-binding factor A.